The primary structure comprises 534 residues: NEDD8-activating enzyme E1 regulatory subunit (534 aa).

A2 bears the N-acetylalanine mark. N6-acetyllysine is present on residues K6 and K341. Positions 331–344 (DMIADSGKYIKLQN) are interaction with UBA3.

Belongs to the ubiquitin-activating E1 family. ULA1 subfamily. Heterodimer of UBA3 and NAE1. The complex binds NEDD8 and UBE2M. Binds APP and TP53BP2. Ubiquitinated by TRIP12, leading to its degradation by the proteasome. Ubiquitous in fetal tissues. Expressed throughout the adult brain.

Its subcellular location is the cell membrane. It functions in the pathway protein modification; protein neddylation. Binding of TP53BP2 to the regulatory subunit NAE1 decreases neddylation activity. In terms of biological role, regulatory subunit of the dimeric UBA3-NAE1 E1 enzyme. E1 activates NEDD8 by first adenylating its C-terminal glycine residue with ATP, thereafter linking this residue to the side chain of the catalytic cysteine, yielding a NEDD8-UBA3 thioester and free AMP. E1 finally transfers NEDD8 to the catalytic cysteine of UBE2M. Necessary for cell cycle progression through the S-M checkpoint. Overexpression of NAE1 causes apoptosis through deregulation of NEDD8 conjugation. The covalent attachment of NEDD8 to target proteins is known as 'neddylation' and the process is involved in the regulation of cell growth, viability and development. The chain is NEDD8-activating enzyme E1 regulatory subunit (NAE1) from Homo sapiens (Human).